Reading from the N-terminus, the 783-residue chain is ATP-dependent 6-phosphofructokinase (783 aa).

Residues 1-10 are compositionally biased toward pro residues; that stretch reads MAPPQAPVQP. The segment at 1–20 is disordered; the sequence is MAPPQAPVQPPKRRRIGVLT. The interval 1-389 is N-terminal catalytic PFK domain 1; sequence MAPPQAPVQP…YHFSYINTST (389 aa). Residues Gly23, 86–87, and 116–119 each bind ATP; these read RC and GDGS. Residue Asp117 coordinates Mg(2+). Substrate-binding positions include 162 to 164, Arg199, 206 to 208, Glu263, Arg291, and 297 to 300; these read SID, MGR, and HTQR. Asp164 functions as the Proton acceptor in the catalytic mechanism. The tract at residues 390-403 is interdomain linker; the sequence is PDHPKLLLPENKRM. The interval 404–783 is C-terminal regulatory PFK domain 2; that stretch reads RIGIIHVGAP…NATWSCYENA (380 aa). Beta-D-fructose 2,6-bisphosphate-binding positions include Arg480, 537 to 541, Arg575, 582 to 584, Glu642, Arg668, 674 to 677, and Arg749; these read TISNN, QGG, and HFQQ.

This sequence belongs to the phosphofructokinase type A (PFKA) family. ATP-dependent PFK group I subfamily. Eukaryotic two domain clade 'E' sub-subfamily. In terms of assembly, homotetramer. Mg(2+) is required as a cofactor.

Its subcellular location is the cytoplasm. It catalyses the reaction beta-D-fructose 6-phosphate + ATP = beta-D-fructose 1,6-bisphosphate + ADP + H(+). Its pathway is carbohydrate degradation; glycolysis; D-glyceraldehyde 3-phosphate and glycerone phosphate from D-glucose: step 3/4. Allosterically activated by ADP, AMP, or fructose 2,6-bisphosphate, and allosterically inhibited by ATP or citrate. Catalyzes the phosphorylation of D-fructose 6-phosphate to fructose 1,6-bisphosphate by ATP, the first committing step of glycolysis. This chain is ATP-dependent 6-phosphofructokinase (pfkA), found in Aspergillus niger.